Consider the following 454-residue polypeptide: tRNA modification GTPase MnmE (454 aa).

Residues Arg23, Glu80, and Lys120 each contribute to the (6S)-5-formyl-5,6,7,8-tetrahydrofolate site. The region spanning 216-377 (GMKVVIAGRP…LRNHLKQSMG (162 aa)) is the TrmE-type G domain. Asn226 lines the K(+) pocket. Residues 226–231 (NAGKSS), 245–251 (TDIAGTT), 270–273 (DTAG), 335–338 (NKAD), and 358–360 (SAR) each bind GTP. Ser230 is a binding site for Mg(2+). Thr245, Ile247, and Thr250 together coordinate K(+). Thr251 lines the Mg(2+) pocket. Lys454 serves as a coordination point for (6S)-5-formyl-5,6,7,8-tetrahydrofolate.

The protein belongs to the TRAFAC class TrmE-Era-EngA-EngB-Septin-like GTPase superfamily. TrmE GTPase family. As to quaternary structure, homodimer. Heterotetramer of two MnmE and two MnmG subunits. K(+) is required as a cofactor.

The protein localises to the cytoplasm. Exhibits a very high intrinsic GTPase hydrolysis rate. Involved in the addition of a carboxymethylaminomethyl (cmnm) group at the wobble position (U34) of certain tRNAs, forming tRNA-cmnm(5)s(2)U34. This chain is tRNA modification GTPase MnmE, found in Escherichia coli (strain SMS-3-5 / SECEC).